Reading from the N-terminus, the 154-residue chain is Large ribosomal subunit protein uL13 (154 aa).

It belongs to the universal ribosomal protein uL13 family. Part of the 50S ribosomal subunit.

Its function is as follows. This protein is one of the early assembly proteins of the 50S ribosomal subunit, although it is not seen to bind rRNA by itself. It is important during the early stages of 50S assembly. This chain is Large ribosomal subunit protein uL13, found in Bartonella henselae (strain ATCC 49882 / DSM 28221 / CCUG 30454 / Houston 1) (Rochalimaea henselae).